Reading from the N-terminus, the 839-residue chain is Protein translocase subunit SecA (839 aa).

ATP is bound by residues Q85, 103–107 (GEGKT), and D492. Residues 794–820 (EINYSGPDAGDTKKEPVRRKEKKIGRN) form a disordered region. Residues C823, C825, C834, and C835 each contribute to the Zn(2+) site.

It belongs to the SecA family. As to quaternary structure, monomer and homodimer. Part of the essential Sec protein translocation apparatus which comprises SecA, SecYEG and auxiliary proteins SecDF. Other proteins may also be involved. Zn(2+) serves as cofactor.

It localises to the cell membrane. Its subcellular location is the cytoplasm. The enzyme catalyses ATP + H2O + cellular proteinSide 1 = ADP + phosphate + cellular proteinSide 2.. Its function is as follows. Part of the Sec protein translocase complex. Interacts with the SecYEG preprotein conducting channel. Has a central role in coupling the hydrolysis of ATP to the transfer of proteins into and across the cell membrane, serving as an ATP-driven molecular motor driving the stepwise translocation of polypeptide chains across the membrane. This chain is Protein translocase subunit SecA, found in Clostridium acetobutylicum (strain ATCC 824 / DSM 792 / JCM 1419 / IAM 19013 / LMG 5710 / NBRC 13948 / NRRL B-527 / VKM B-1787 / 2291 / W).